Consider the following 412-residue polypeptide: Protein MT3510 (412 aa).

N6-(pyridoxal phosphate)lysine is present on Lys-227.

It belongs to the DegT/DnrJ/EryC1 family.

In Mycobacterium tuberculosis (strain CDC 1551 / Oshkosh), this protein is Protein MT3510.